The sequence spans 196 residues: MVKIGVLGLQGAVREHVKSVEASGAEAVVVKRIEQLEEIDGLILPGGESTTMRRLIDKYAFMEPLRTFAKSGKPMFGTCAGMILLAKTLIGYEEAHIGAMDITVERNAFGRQKDSFEAALSIEGVGEDFVGVFIRAPYVVEVADNVEVLSKHGNRMVAVRQDQFLAASFHPELTDDHRVTAYFVEMVKEAKMKKVV.

47-49 lines the L-glutamine pocket; that stretch reads GES. C79 functions as the Nucleophile in the catalytic mechanism. Residues R106 and 134–135 each bind L-glutamine; that span reads IR. Active-site charge relay system residues include H170 and E172.

Belongs to the glutaminase PdxT/SNO family. As to quaternary structure, in the presence of PdxS, forms a dodecamer of heterodimers. Only shows activity in the heterodimer.

The enzyme catalyses aldehydo-D-ribose 5-phosphate + D-glyceraldehyde 3-phosphate + L-glutamine = pyridoxal 5'-phosphate + L-glutamate + phosphate + 3 H2O + H(+). It carries out the reaction L-glutamine + H2O = L-glutamate + NH4(+). The protein operates within cofactor biosynthesis; pyridoxal 5'-phosphate biosynthesis. In terms of biological role, catalyzes the hydrolysis of glutamine to glutamate and ammonia as part of the biosynthesis of pyridoxal 5'-phosphate. The resulting ammonia molecule is channeled to the active site of PdxS. This chain is Pyridoxal 5'-phosphate synthase subunit PdxT, found in Bacillus cereus (strain B4264).